Reading from the N-terminus, the 126-residue chain is Cornifin alpha (126 aa).

Residue serine 2 is modified to N-acetylserine. Tandem repeats lie at residues 3 to 14, 18 to 29, 31 to 38, 39 to 46, 47 to 54, 55 to 62, 63 to 70, 71 to 78, 79 to 86, 87 to 94, 95 to 102, 103 to 110, and 111 to 118. Residues 3–29 are 2 X 12 AA approximate repeats; it reads SQQQKQPCTLPPQLQQHQVKQPCQPPP. Positions 20–43 are disordered; that stretch reads QVKQPCQPPPQEPCVPKTKEPCQP. The interval 31-122 is 11 X 8 AA approximate tandem repeats; that stretch reads EPCVPKTKEP…CQPKVPEPCQ (92 aa). The disordered stretch occupies residues 104–126; that stretch reads PCQSKVPQPCQPKVPEPCQTKQK.

It belongs to the cornifin (SPRR) family. In terms of tissue distribution, suprabasal layers of squamous-differentiated tissues such as epidermis, esophagus, tongue and trachea.

It is found in the cytoplasm. Cross-linked envelope protein of keratinocytes. It is a keratinocyte protein that first appears in the cell cytosol, but ultimately becomes cross-linked to membrane proteins by transglutaminase. All that results in the formation of an insoluble envelope beneath the plasma membrane. The chain is Cornifin alpha from Oryctolagus cuniculus (Rabbit).